The chain runs to 945 residues: Isoleucine--tRNA ligase (945 aa).

The 'HIGH' region motif lies at 66–76 (PYANGDIHLGH). E581 is a binding site for L-isoleucyl-5'-AMP. Residues 622-626 (KMSKS) carry the 'KMSKS' region motif. K625 contacts ATP. C908, C911, C928, and C931 together coordinate Zn(2+).

This sequence belongs to the class-I aminoacyl-tRNA synthetase family. IleS type 1 subfamily. As to quaternary structure, monomer. Zn(2+) is required as a cofactor.

It is found in the cytoplasm. It carries out the reaction tRNA(Ile) + L-isoleucine + ATP = L-isoleucyl-tRNA(Ile) + AMP + diphosphate. Functionally, catalyzes the attachment of isoleucine to tRNA(Ile). As IleRS can inadvertently accommodate and process structurally similar amino acids such as valine, to avoid such errors it has two additional distinct tRNA(Ile)-dependent editing activities. One activity is designated as 'pretransfer' editing and involves the hydrolysis of activated Val-AMP. The other activity is designated 'posttransfer' editing and involves deacylation of mischarged Val-tRNA(Ile). This is Isoleucine--tRNA ligase from Burkholderia ambifaria (strain MC40-6).